The primary structure comprises 169 residues: Small proline-rich protein 3 (169 aa).

Positions 1 to 24 (MSSYQQKQTFTPPPQLQQQQVKQP) are enriched in low complexity. The segment at 1 to 57 (MSSYQQKQTFTPPPQLQQQQVKQPSQPPPQEIFVPTTKEPCHSKVPQPGNTKIPEPG) is disordered. An N-acetylserine modification is found at serine 2. Repeat copies occupy residues 43-50 (SKVPQPGN), 51-58 (TKIPEPGC), 59-66 (TKVPEPGC), 67-74 (TKVPEPGC), 75-82 (TKVPEPGC), 83-90 (TKVPEPGC), 91-98 (TKVPEPGC), 99-106 (TKVPEPGY), 107-114 (TKVPEPGS), 115-122 (IKVPDQGF), 123-130 (IKFPEPGA), 131-138 (IKVPEQGY), 139-146 (TKVPVPGY), and 147-154 (TKLPEPCP). A 14 X 8 AA approximate tandem repeats region spans residues 43-154 (SKVPQPGNTK…GYTKLPEPCP (112 aa)). The tract at residues 150–169 (PEPCPSTVTPGPAQQKTKQK) is disordered. Polar residues predominate over residues 155-169 (STVTPGPAQQKTKQK).

The protein resides in the cytoplasm. Cross-linked envelope protein of keratinocytes. The polypeptide is Small proline-rich protein 3 (SPRR3) (Homo sapiens (Human)).